Reading from the N-terminus, the 443-residue chain is Xaa-Pro dipeptidase (443 aa).

Asp-246, Asp-257, His-339, Glu-384, and Glu-423 together coordinate Mn(2+).

This sequence belongs to the peptidase M24B family. Bacterial-type prolidase subfamily. It depends on Mn(2+) as a cofactor.

It catalyses the reaction Xaa-L-Pro dipeptide + H2O = an L-alpha-amino acid + L-proline. Its function is as follows. Splits dipeptides with a prolyl residue in the C-terminal position. This chain is Xaa-Pro dipeptidase, found in Enterobacter sp. (strain 638).